We begin with the raw amino-acid sequence, 150 residues long: UPF0178 protein Maqu_2186 (150 aa).

Belongs to the UPF0178 family.

The sequence is that of UPF0178 protein Maqu_2186 from Marinobacter nauticus (strain ATCC 700491 / DSM 11845 / VT8) (Marinobacter aquaeolei).